The sequence spans 247 residues: ATP synthase subunit a, chloroplastic (247 aa).

The next 5 membrane-spanning stretches (helical) occupy residues 36–56, 95–115, 134–154, 199–219, and 220–240; these read GQVLMTSWFVFAVIAILSIAG, IPFLGTLFLFIFVSNWSGALI, INTTVALALLTSTAYFYAGFS, LVVGVLVALVPLVVPIPIMLL, and GLFTSGIQALVFATLAGAYIG.

Belongs to the ATPase A chain family. In terms of assembly, F-type ATPases have 2 components, CF(1) - the catalytic core - and CF(0) - the membrane proton channel. CF(1) has five subunits: alpha(3), beta(3), gamma(1), delta(1), epsilon(1). CF(0) has four main subunits: a, b, b' and c.

The protein localises to the plastid. The protein resides in the chloroplast thylakoid membrane. Functionally, key component of the proton channel; it plays a direct role in the translocation of protons across the membrane. This is ATP synthase subunit a, chloroplastic from Tupiella akineta (Green alga).